The primary structure comprises 87 residues: Putative defensin-like protein 235 (87 aa).

An N-terminal signal peptide occupies residues 1 to 26 (MRSATFFLVSCVLMSFVLSHVKEVEA). 3 cysteine pairs are disulfide-bonded: Cys-46-Cys-73, Cys-54-Cys-82, and Cys-71-Cys-84.

This sequence belongs to the DEFL family.

It localises to the secreted. The protein is Putative defensin-like protein 235 (SCRL26) of Arabidopsis thaliana (Mouse-ear cress).